The chain runs to 277 residues: Large ribosomal subunit protein uL2 (277 aa).

The disordered stretch occupies residues 223 to 264; that stretch reads VAMNPVDHPHGGGEGKTAAGRHPVSPWGTPSKGSRTRRNKRT.

Belongs to the universal ribosomal protein uL2 family. As to quaternary structure, part of the 50S ribosomal subunit. Forms a bridge to the 30S subunit in the 70S ribosome.

Its function is as follows. One of the primary rRNA binding proteins. Required for association of the 30S and 50S subunits to form the 70S ribosome, for tRNA binding and peptide bond formation. It has been suggested to have peptidyltransferase activity; this is somewhat controversial. Makes several contacts with the 16S rRNA in the 70S ribosome. The protein is Large ribosomal subunit protein uL2 of Nitrosomonas eutropha (strain DSM 101675 / C91 / Nm57).